Consider the following 256-residue polypeptide: MGASEELEYLKSLVAQLNDKIASLEAKAKGPASKTPAQQLRTILIGPPGAGKGTQAPRIRDEFCVCHLATGDMLRDQVEKKTPLGIAAKKIMDAGGLVSDDIMVNMIKDQLENNEACKNGFVLDGFPRTVPQAQKLDGMLAERKEKLDSVVQLLIDDQLLISRITGRLIHPASGRSYHKIFNPPKKAGIDDLTGEPLIQRSDDNAETLTRRLKTYHTQTGPVVDYYKAKGLWHGVDAAQSPSVVWDSMRGIFAGRK.

49–54 is a binding site for ATP; that stretch reads GAGKGT. Residues 69 to 98 form an NMP region; sequence ATGDMLRDQVEKKTPLGIAAKKIMDAGGLV. Residues threonine 70, arginine 75, 96 to 98, 125 to 128, and glutamine 132 each bind AMP; these read GLV and GFPR. The tract at residues 166-203 is LID; sequence GRLIHPASGRSYHKIFNPPKKAGIDDLTGEPLIQRSDD. Residues arginine 167 and 176 to 177 contribute to the ATP site; that span reads SY. Arginine 200 and arginine 211 together coordinate AMP. Glutamine 239 contributes to the ATP binding site.

The protein belongs to the adenylate kinase family. AK2 subfamily. As to quaternary structure, monomer.

The protein localises to the cytoplasm. It localises to the cytosol. It is found in the mitochondrion intermembrane space. It carries out the reaction AMP + ATP = 2 ADP. Its function is as follows. Catalyzes the reversible transfer of the terminal phosphate group between ATP and AMP. Plays an important role in cellular energy homeostasis and in adenine nucleotide metabolism. Adenylate kinase activity is critical for regulation of the phosphate utilization and the AMP de novo biosynthesis pathways. This chain is Adenylate kinase, found in Coprinopsis cinerea (strain Okayama-7 / 130 / ATCC MYA-4618 / FGSC 9003) (Inky cap fungus).